We begin with the raw amino-acid sequence, 393 residues long: Succinate--CoA ligase [ADP-forming] subunit beta (393 aa).

Positions 9-237 constitute an ATP-grasp domain; the sequence is RDLFAKHGVP…KDAANPLEAA (229 aa). ATP is bound by residues K45, 52-54, E92, P95, and E100; that span reads GRG. Residues N192 and D206 each contribute to the Mg(2+) site. Substrate-binding positions include N257 and 319–321; that span reads GIT.

This sequence belongs to the succinate/malate CoA ligase beta subunit family. In terms of assembly, heterotetramer of two alpha and two beta subunits. Requires Mg(2+) as cofactor.

It carries out the reaction succinate + ATP + CoA = succinyl-CoA + ADP + phosphate. The enzyme catalyses GTP + succinate + CoA = succinyl-CoA + GDP + phosphate. Its pathway is carbohydrate metabolism; tricarboxylic acid cycle; succinate from succinyl-CoA (ligase route): step 1/1. Its function is as follows. Succinyl-CoA synthetase functions in the citric acid cycle (TCA), coupling the hydrolysis of succinyl-CoA to the synthesis of either ATP or GTP and thus represents the only step of substrate-level phosphorylation in the TCA. The beta subunit provides nucleotide specificity of the enzyme and binds the substrate succinate, while the binding sites for coenzyme A and phosphate are found in the alpha subunit. The sequence is that of Succinate--CoA ligase [ADP-forming] subunit beta from Streptomyces griseus subsp. griseus (strain JCM 4626 / CBS 651.72 / NBRC 13350 / KCC S-0626 / ISP 5235).